Reading from the N-terminus, the 527-residue chain is Hopanoid C-2 methylase (527 aa).

The region spanning 36–148 (VAAFMPPQGL…AKLTHDVTRP (113 aa)) is the B12-binding domain. The 236-residue stretch at 173–408 (AECSKYLLGS…HDQVVAMWKD (236 aa)) folds into the Radical SAM core domain. The [4Fe-4S] cluster site is built by cysteine 189, cysteine 193, and cysteine 196.

The protein belongs to the radical SAM superfamily. The cofactor is [4Fe-4S] cluster.

Functionally, required for methylation of hopanoids at the C-2 position. This is Hopanoid C-2 methylase from Rhodopseudomonas palustris (strain TIE-1).